Here is a 324-residue protein sequence, read N- to C-terminus: Carbonic anhydrase, chloroplastic (324 aa).

Belongs to the beta-class carbonic anhydrase family. Homohexamer.

It is found in the plastid. The protein resides in the chloroplast stroma. It carries out the reaction hydrogencarbonate + H(+) = CO2 + H2O. Reversible hydration of carbon dioxide. This chain is Carbonic anhydrase, chloroplastic, found in Hordeum vulgare (Barley).